Here is a 213-residue protein sequence, read N- to C-terminus: Cytokinin riboside 5'-monophosphate phosphoribohydrolase LOG2 (213 aa).

Substrate-binding positions include glutamate 79, arginine 97 to lysine 98, glycine 114 to glutamate 120, and threonine 126.

This sequence belongs to the LOG family. Expressed in roots and shoots. Detected in root hairs.

The protein resides in the cytoplasm. Its subcellular location is the nucleus. The catalysed reaction is N(6)-(dimethylallyl)adenosine 5'-phosphate + H2O = N(6)-dimethylallyladenine + D-ribose 5-phosphate. It catalyses the reaction 9-ribosyl-trans-zeatin 5'-phosphate + H2O = trans-zeatin + D-ribose 5-phosphate. Cytokinin-activating enzyme working in the direct activation pathway. Phosphoribohydrolase that converts inactive cytokinin nucleotides to the biologically active free-base forms. This Arabidopsis thaliana (Mouse-ear cress) protein is Cytokinin riboside 5'-monophosphate phosphoribohydrolase LOG2 (LOG2).